Reading from the N-terminus, the 448-residue chain is N-succinylarginine dihydrolase (448 aa).

Residues 19–28, Asn-110, and 137–138 contribute to the substrate site; these read GGLSYGNVAS and HR. The active site involves Glu-174. Residue Arg-214 coordinates substrate. His-250 is a catalytic residue. Substrate-binding residues include Asp-252 and Asn-365. The Nucleophile role is filled by Cys-371.

This sequence belongs to the succinylarginine dihydrolase family. In terms of assembly, homodimer.

The enzyme catalyses N(2)-succinyl-L-arginine + 2 H2O + 2 H(+) = N(2)-succinyl-L-ornithine + 2 NH4(+) + CO2. It participates in amino-acid degradation; L-arginine degradation via AST pathway; L-glutamate and succinate from L-arginine: step 2/5. Functionally, catalyzes the hydrolysis of N(2)-succinylarginine into N(2)-succinylornithine, ammonia and CO(2). The sequence is that of N-succinylarginine dihydrolase from Pseudomonas aeruginosa (strain UCBPP-PA14).